The primary structure comprises 340 residues: Biotin synthase (340 aa).

The 228-residue stretch at asparagine 45–arginine 272 folds into the Radical SAM core domain. Cysteine 60, cysteine 64, and cysteine 67 together coordinate [4Fe-4S] cluster. Cysteine 104, cysteine 135, cysteine 195, and arginine 267 together coordinate [2Fe-2S] cluster.

This sequence belongs to the radical SAM superfamily. Biotin synthase family. In terms of assembly, homodimer. Requires [4Fe-4S] cluster as cofactor. [2Fe-2S] cluster serves as cofactor.

The enzyme catalyses (4R,5S)-dethiobiotin + (sulfur carrier)-SH + 2 reduced [2Fe-2S]-[ferredoxin] + 2 S-adenosyl-L-methionine = (sulfur carrier)-H + biotin + 2 5'-deoxyadenosine + 2 L-methionine + 2 oxidized [2Fe-2S]-[ferredoxin]. It functions in the pathway cofactor biosynthesis; biotin biosynthesis; biotin from 7,8-diaminononanoate: step 2/2. Catalyzes the conversion of dethiobiotin (DTB) to biotin by the insertion of a sulfur atom into dethiobiotin via a radical-based mechanism. The protein is Biotin synthase of Thioalkalivibrio sulfidiphilus (strain HL-EbGR7).